The chain runs to 239 residues: MEIFPAIDLKKGRCVRLYQGEFSKETVMNEDPVAQAIIFETFGAKRLHIVDLDGAVAGESLNLSVIERICKAVRIPVQVGGGIRSLVAVEKLFSVGVDKVILGTAALYDKPFLEEAVFLYKEKIIVGIDAKNGFVATRGWLDVSEISYIDLAKQMENIGVQTIVFTDISKDGTLAGPNIAQLELLQKSVSTRLIASGGIASIQDVKKLNDMNIYGVIIGKALYEKTIDLEEVLEVTKLC.

Residue aspartate 8 is the Proton acceptor of the active site. Catalysis depends on aspartate 129, which acts as the Proton donor.

It belongs to the HisA/HisF family.

The protein localises to the cytoplasm. It carries out the reaction 1-(5-phospho-beta-D-ribosyl)-5-[(5-phospho-beta-D-ribosylamino)methylideneamino]imidazole-4-carboxamide = 5-[(5-phospho-1-deoxy-D-ribulos-1-ylimino)methylamino]-1-(5-phospho-beta-D-ribosyl)imidazole-4-carboxamide. It participates in amino-acid biosynthesis; L-histidine biosynthesis; L-histidine from 5-phospho-alpha-D-ribose 1-diphosphate: step 4/9. The chain is 1-(5-phosphoribosyl)-5-[(5-phosphoribosylamino)methylideneamino] imidazole-4-carboxamide isomerase from Bacillus cereus (strain ATCC 10987 / NRS 248).